The following is a 361-amino-acid chain: Chorismate synthase (361 aa).

Positions 40 to 49 (DLQHDLDRRR) are enriched in basic and acidic residues. The segment at 40-60 (DLQHDLDRRRPGTSRHTTQRR) is disordered. Arg-48 and Arg-54 together coordinate NADP(+). FMN-binding positions include 125–127 (RSS), 237–238 (NA), Gly-277, 292–296 (KPTSS), and Arg-318.

It belongs to the chorismate synthase family. As to quaternary structure, homotetramer. FMNH2 serves as cofactor.

The catalysed reaction is 5-O-(1-carboxyvinyl)-3-phosphoshikimate = chorismate + phosphate. The protein operates within metabolic intermediate biosynthesis; chorismate biosynthesis; chorismate from D-erythrose 4-phosphate and phosphoenolpyruvate: step 7/7. Catalyzes the anti-1,4-elimination of the C-3 phosphate and the C-6 proR hydrogen from 5-enolpyruvylshikimate-3-phosphate (EPSP) to yield chorismate, which is the branch point compound that serves as the starting substrate for the three terminal pathways of aromatic amino acid biosynthesis. This reaction introduces a second double bond into the aromatic ring system. The chain is Chorismate synthase from Chromohalobacter salexigens (strain ATCC BAA-138 / DSM 3043 / CIP 106854 / NCIMB 13768 / 1H11).